Consider the following 541-residue polypeptide: Glutamine-dependent NAD(+) synthetase (541 aa).

In terms of domain architecture, CN hydrolase spans 4-243; the sequence is FKIALAQFSP…EELYYSEFDI (240 aa). The Proton acceptor; for glutaminase activity role is filled by Glu44. Residue Lys111 is the For glutaminase activity of the active site. Position 117 (Tyr117) interacts with L-glutamine. Cys147 functions as the Nucleophile; for glutaminase activity in the catalytic mechanism. Ser173 and Lys179 together coordinate L-glutamine. 286–293 provides a ligand contact to ATP; that stretch reads GLSGGIDS. Asn369 contacts deamido-NAD(+). Thr393 is an ATP binding site. Residues Glu398 and Lys510 each contribute to the deamido-NAD(+) site.

This sequence in the C-terminal section; belongs to the NAD synthetase family.

It carries out the reaction deamido-NAD(+) + L-glutamine + ATP + H2O = L-glutamate + AMP + diphosphate + NAD(+) + H(+). Its pathway is cofactor biosynthesis; NAD(+) biosynthesis; NAD(+) from deamido-NAD(+) (L-Gln route): step 1/1. In terms of biological role, catalyzes the ATP-dependent amidation of deamido-NAD to form NAD. Uses L-glutamine as a nitrogen source. In vitro, can also use ammonia as donor with comparable specific activity, but cannot use nicotinate mononucleotide (NaMN) as substrate. This chain is Glutamine-dependent NAD(+) synthetase, found in Acinetobacter baylyi (strain ATCC 33305 / BD413 / ADP1).